The primary structure comprises 570 residues: Putative ABC transporter ATP-binding protein SACOL2708 (570 aa).

2 consecutive ABC transporter domains span residues 6-247 (ISFK…GIRE) and 304-537 (LELN…ASLR). ATP contacts are provided by residues 40 to 47 (GASGSGKS) and 338 to 345 (GHNGAGKS).

Belongs to the ABC transporter superfamily.

Its subcellular location is the cell membrane. In terms of biological role, probably part of an ABC transporter complex. Responsible for energy coupling to the transport system. The chain is Putative ABC transporter ATP-binding protein SACOL2708 from Staphylococcus aureus (strain COL).